A 292-amino-acid polypeptide reads, in one-letter code: Formamidopyrimidine-DNA glycosylase (292 aa).

Pro-2 (schiff-base intermediate with DNA) is an active-site residue. The active-site Proton donor is Glu-3. Lys-58 acts as the Proton donor; for beta-elimination activity in catalysis. DNA-binding residues include His-103, Arg-122, and Lys-165. The FPG-type zinc finger occupies 256-292; that stretch reads RVYDRALHPCPTPGCKGEISRITQGGRSSFFCSMCQK. The active-site Proton donor; for delta-elimination activity is Arg-282.

The protein belongs to the FPG family. Monomer. The cofactor is Zn(2+).

The enzyme catalyses Hydrolysis of DNA containing ring-opened 7-methylguanine residues, releasing 2,6-diamino-4-hydroxy-5-(N-methyl)formamidopyrimidine.. It catalyses the reaction 2'-deoxyribonucleotide-(2'-deoxyribose 5'-phosphate)-2'-deoxyribonucleotide-DNA = a 3'-end 2'-deoxyribonucleotide-(2,3-dehydro-2,3-deoxyribose 5'-phosphate)-DNA + a 5'-end 5'-phospho-2'-deoxyribonucleoside-DNA + H(+). Involved in base excision repair of DNA damaged by oxidation or by mutagenic agents. Acts as a DNA glycosylase that recognizes and removes damaged bases. Has a preference for oxidized purines, such as 7,8-dihydro-8-oxoguanine (8-oxoG). Has AP (apurinic/apyrimidinic) lyase activity and introduces nicks in the DNA strand. Cleaves the DNA backbone by beta-delta elimination to generate a single-strand break at the site of the removed base with both 3'- and 5'-phosphates. In Methylocella silvestris (strain DSM 15510 / CIP 108128 / LMG 27833 / NCIMB 13906 / BL2), this protein is Formamidopyrimidine-DNA glycosylase.